The chain runs to 530 residues: Developmental and secondary metabolism regulator VEL1 (530 aa).

The 195-residue stretch at 26–220 folds into the Velvet domain; it reads NRSLWYQMTV…ADQGCQVRIR (195 aa). The Nuclear localization signal motif lies at 40–45; the sequence is ERARAC. Positions 206–516 are disordered; that stretch reads LSKTVADQGC…HDQGWYSRAD (311 aa). Residues 244 to 253 are compositionally biased toward basic and acidic residues; it reads FERREEDFGR. Pro residues predominate over residues 295 to 305; it reads YPPPPPPPSYE. Over residues 347–356 the composition is skewed to polar residues; the sequence is YAPTAQSPYS. Positions 380 to 389 are enriched in basic and acidic residues; sequence VKHDLYDRRQ. Over residues 390–404 the composition is skewed to low complexity; that stretch reads STSSYVPPSPSVYST. The span at 415–426 shows a compositional bias: pro residues; the sequence is SYPPTPVAAPRP. Positions 429-460 are PEST; it reads MHSQTSLPALKIDQLVSPVSPLPPIEPQTGPA. Polar residues predominate over residues 478–490; the sequence is FAQSTRPLHNGQR.

The protein belongs to the velvet family. VeA subfamily. In terms of assembly, component of the heterotrimeric velvet complex composed of LAE1, VEL1 and VEL2; VEL1 acting as a bridging protein between LAE1 and VEL2. Interacts with LAE1.

Its subcellular location is the nucleus. It is found in the cytoplasm. In terms of biological role, component of the velvet transcription factor complex that controls sexual/asexual developmental ratio in response to light, promoting sexual development in the darkness while stimulating asexual sporulation under illumination. The velvet complex hat acts as a global regulator for secondary metabolite gene expression. Controls positively the expression of the gibberellins, fumonisins and fusarin C gene clusters. Controls the expression of the fusaric acid gene cluster. Controls negatively the expression of the bikaverin gene cluster. Regulates the expression of laeA. Plays a crucial role in virulence. The chain is Developmental and secondary metabolism regulator VEL1 from Gibberella fujikuroi (strain CBS 195.34 / IMI 58289 / NRRL A-6831) (Bakanae and foot rot disease fungus).